Here is a 185-residue protein sequence, read N- to C-terminus: Putative sulfur carrier protein YrkF (185 aa).

The active-site Cysteine persulfide intermediate is Cys15. In terms of domain architecture, Rhodanese spans 101-185; sequence SDESLNILDV…GMRDWTGKTE (85 aa).

This sequence belongs to the sulfur carrier protein TusA family.

This is Putative sulfur carrier protein YrkF (yrkF) from Bacillus subtilis (strain 168).